The following is a 534-amino-acid chain: Inorganic phosphate transporter 1-6 (534 aa).

Residues 1 to 29 are Cytoplasmic-facing; that stretch reads MGGGGGEQQQLEVLHALDVAKTQWYHFTA. The helical transmembrane segment at 30–50 threads the bilayer; the sequence is IVVAGMGFFTDAYDLFCISLV. The Extracellular segment spans residues 51–75; that stretch reads TKLLGRIYYRVDGSPSPGTLPPHVS. Residues 76–96 form a helical membrane-spanning segment; it reads ASVNGVAFVGTLSGQLFFGWL. At 97 to 104 the chain is on the cytoplasmic side; it reads GDKLGRKR. The chain crosses the membrane as a helical span at residues 105-125; the sequence is VYGITLMLMVLCSLASALSFG. The Extracellular segment spans residues 126–127; the sequence is HT. A helical membrane pass occupies residues 128–148; it reads PTSVMATLCFFRFWLGFGIGG. Residues 149–168 lie on the Cytoplasmic side of the membrane; sequence DYPLSATIMSEYANKKTRGA. The helical transmembrane segment at 169–189 threads the bilayer; sequence FIAAVFAMQGFGIITGGLVAI. The Extracellular segment spans residues 190 to 216; the sequence is LVSASFRAAFPAPPYGEDPVASTPPQA. Residues 217-237 traverse the membrane as a helical segment; that stretch reads DFVWRIILMLGALPAALTYYW. Topologically, residues 238-294 are cytoplasmic; it reads RTKMPETARYTALVANNAKQAAADMSKVLQVVEMRNIGNNGGSRRPFGLFSGEFVRR. A helical transmembrane segment spans residues 295–315; that stretch reads HGLHLVGTSATWLLLDIAFYS. Over 316-350 the chain is Extracellular; that stretch reads QNLFQKDIFSAVGWIPKAATMSALEELFRIARAQT. A helical transmembrane segment spans residues 351–371; sequence LIALCGTVPGYWFTVALIDVV. Residues 372 to 375 are Cytoplasmic-facing; the sequence is GRFK. Residues 376–396 traverse the membrane as a helical segment; sequence IQAVGFFMMTLFMLTLALPYH. The Extracellular segment spans residues 397 to 405; sequence HWTAPGKNH. Residues 406–426 traverse the membrane as a helical segment; sequence VGFLLLYGLTFFFANFGPNST. The Cytoplasmic segment spans residues 427–445; it reads TFIVPAEIFPARLRATCHG. The chain crosses the membrane as a helical span at residues 446–466; that stretch reads ISAASGKLGAIVGSFGFLYLA. At 467–486 the chain is on the extracellular side; it reads QSPDRSKTEHGYPPGIGVRN. The chain crosses the membrane as a helical span at residues 487 to 507; the sequence is SLFLLAACNLLGLLFTFLVPE. Residues 508 to 534 are Cytoplasmic-facing; sequence SKGKSLEEMSGDAEAQEEAPPPLQTVL. The interval 514 to 534 is disordered; the sequence is EEMSGDAEAQEEAPPPLQTVL.

The protein belongs to the major facilitator superfamily. Phosphate:H(+) symporter (TC 2.A.1.9) family. In terms of tissue distribution, highly expressed in leaves and at low levels in roots. Expressed in leaf xylem parenchyma cells.

It localises to the membrane. High-affinity transporter for external inorganic phosphate (Pi). Probably involved in Pi uptake, translocation and internal transport throughout the plant. This is Inorganic phosphate transporter 1-6 (PHT1-6) from Oryza sativa subsp. japonica (Rice).